The following is a 1137-amino-acid chain: MDLYHTPAGALDKLVAHSLHPAPEFTAAVRRALGSLDNVLRKNGAGGLQRPRVIRIIKGGAHARGTALRGGTDVELVIFLDCLRSFGDQKTCHTEILGAIQALLESWGCNPGPGLTFEFSGPKASGILQFRLASVDQENWIDVSLVPAFDALGQLHSEVKPTPNVYSSLLSSHCQAGEHSACFTELRKNFVNIRPVKLKNLILLVKHWYRQVQTQVVRATLPPSYALELLTIFAWEQGCRKDAFSLAQGLRTVLALIQRNKHLCIFWTENYGFEDPAVGEFLRRQLKRPRPVILDPADPTWDLGNGTAWCWDVLAKEAEYSFNQQCFKEASGALVQPWEGPGLPCAGILDLGHPIQQGAKHALEDNNGHLAVQPMKESLQPSNPARGLPETATKISAMPDPTVTETHKSLKKSVHPKTVSETVVNPSSHVWITQSTASSNTPPGHSSMSTAGSQMGPDLSQIPSKELDSFIQDHLRPSSQFQQQVRQAIDTILCCLREKCVDKVLRVSKGGSFGRGTDLRGKCDVELVIFYKTLGDFKGQNSHQTEILCDMQAQLQRWCQNPAPGLSLQFIEQKSNALHLQLVPTNLSNRVDLSVLPAFDAVGPLKSGAKPLPETYSSLLSSGCQAGEHAACFAELRRNFINTRPAKLRSLMLLVKHWYRQVAARFEGGETAGAALPPAYALELLTVFAWEQGCGEQKFSMAEGLRTVLRLVQQHQSLCIYWTVNYSVQDPAIRAHLLRQLRKARPLILDPADPTWNMDQGNWKLLAQEAAALESQVCLQSRDGNLVPPWDVMPALLHQTPAQNLDKFICEFLQPDRHFLTQVKRAVDTICSFLKENCFRNSTIKVLKVVKGGSSAKGTALQGRSDADLVVFLSCFRQFSEQGSHRAEIIAEIQAQLEACQQKQRFDVKFEISKRKNPRVLSFTLTSKTLLGQSVDFDVLPAFDALGQLKSGSRPDPRVYTDLIQSYSNAGEFSTCFTELQRDFISSRPTKLKSLIRLVKHWYQQCNKTVKGKGSLPPQHGLELLTVYAWERGSQNPQFNMAEGFRTVLELIGQYRQLCVYWTINYGAEDETIGDFLKMQLQKPRPVILDPADPTGNLGHNARWDLLAKEAAAYTSALCCMDKDGNPIKPWPVKAAV.

The residue at position 1 (methionine 1) is an N-acetylmethionine. The interval 6–341 (TPAGALDKLV…GALVQPWEGP (336 aa)) is OAS domain 1. Interaction with dsRNA regions lie at residues 12-56 (DKLV…VIRI) and 185-199 (ELRK…VKLK). Residues 342–461 (GLPCAGILDL…GSQMGPDLSQ (120 aa)) are linker. The segment covering 434–453 (QSTASSNTPPGHSSMSTAGS) has biased composition (polar residues). The disordered stretch occupies residues 434–462 (QSTASSNTPPGHSSMSTAGSQMGPDLSQI). 2 OAS domain regions span residues 462 to 792 (IPSK…PWDV) and 800 to 1134 (TPAQ…WPVK). ATP is bound at residue serine 854. Positions 866, 868, and 938 each coordinate Mg(2+). ATP is bound by residues arginine 997, lysine 1000, and glutamine 1019.

Belongs to the 2-5A synthase family. Monomer. Mg(2+) is required as a cofactor.

It localises to the cytoplasm. Its subcellular location is the nucleus. It carries out the reaction 3 ATP = 5'-triphosphoadenylyl-(2'-&gt;5')-adenylyl-(2'-&gt;5')-adenosine + 2 diphosphate. With respect to regulation, produced as a latent enzyme which is activated by dsRNA generated during the course of viral infection. Strongly activated by long dsRNAs at least 50 nucleotides in length. ssRNA does not activate the enzyme. Its function is as follows. Interferon-induced, dsRNA-activated antiviral enzyme which plays a critical role in cellular innate antiviral response. In addition, it may also play a role in other cellular processes such as apoptosis, cell growth, differentiation and gene regulation. Synthesizes preferentially dimers of 2'-5'-oligoadenylates (2-5A) from ATP which then bind to the inactive monomeric form of ribonuclease L (RNase L) leading to its dimerization and subsequent activation. Activation of RNase L leads to degradation of cellular as well as viral RNA, resulting in the inhibition of protein synthesis, thus terminating viral replication. Can mediate the antiviral effect via the classical RNase L-dependent pathway or an alternative antiviral pathway independent of RNase L. This chain is 2'-5'-oligoadenylate synthase 3 (Oas3), found in Rattus norvegicus (Rat).